We begin with the raw amino-acid sequence, 196 residues long: Protein LSM12 homolog B (196 aa).

A Sm domain is found at 3–70 (APGPGEYFSV…LAYVSEVDII (68 aa)). Residues 81–175 (ASLNFNKLVN…IVEKHFRDVE (95 aa)) form the AD domain.

The protein belongs to the LSM12 family.

The polypeptide is Protein LSM12 homolog B (lsm12b) (Danio rerio (Zebrafish)).